A 227-amino-acid polypeptide reads, in one-letter code: MDQPTPQPAYVLHSRAYKETSALVDFFTPQGRVRAVLRRARSKGGSLVRPFVPLEVELRGRGELKNVGGMDSAGTAAWLHGDALFSGLYLNELLMRLLPAEAPFPTLFEHYTLTLQALGAGRPLEPLLRSFEWRLLDELGYAFSLQQDVNDQPVAADGLYRLRVDAGLERVELAQPGLFRGTELLALAEANWEAPGALLAAKRLMRQALAVHLGAKPLVSRELFRKR.

The protein belongs to the RecO family.

In terms of biological role, involved in DNA repair and RecF pathway recombination. The chain is DNA repair protein RecO from Pseudomonas putida (strain GB-1).